The sequence spans 123 residues: UPF0102 protein SPO0400 (123 aa).

It belongs to the UPF0102 family.

The polypeptide is UPF0102 protein SPO0400 (Ruegeria pomeroyi (strain ATCC 700808 / DSM 15171 / DSS-3) (Silicibacter pomeroyi)).